Here is a 407-residue protein sequence, read N- to C-terminus: MSDRNKEVKEKKAKHYLREITAKHYKEALEAKERGEKVGWCASNFPQEIATTLGVKVVYPENHAAAVAARGNGQNMCEHAEAMGFSNDVCGYARVNLAVMDIGHSEDQPIPMPDFVLCCNNICNQMIKWYEHIAKTLDIPMILIDIPYNTENTVSQDRIKYIRAQFDDAIKQLEEITGKKWDENKFEEVMKISQESAKQWLRAASYAKYKPSPFSGFDLFNHMAVAVCARGTQEAADAFKMLADEYEENVKTGKSTYRGEEKQRILFEGIACWPYLRHKLTKLSEYGMNVTATVYAEAFGVIYENMDELMAAYNKVPNSISFENALKMRLNAVTSTNTEGAVIHINRSCKLWSGFLYELARRLEKETGIPVVSFDGDQADPRNFSEAQYDTRIQGLNEVMVAKKEAE.

Positions 1 to 4 are excised as a propeptide; sequence MSDR.

The protein belongs to the FldB/FldC dehydratase alpha/beta subunit family. Part of the heterotrimeric phenyllactate dehydratase complex FldABC, composed of (R)-phenyllactate CoA-transferase (FldA) and a heterodimeric (R)-phenyllactyl-CoA dehydratase (FldB and FldC). The cofactor is [4Fe-4S] cluster. No flavin could be detected in the FldABC complex, and the addition of FAD, FMN or riboflavin to the dehydratase do not increase enzymatic activity. serves as cofactor.

It catalyses the reaction (R)-3-phenyllactoyl-CoA = (E)-cinnamoyl-CoA + H2O. It carries out the reaction (R)-3-(4-hydroxyphenyl)lactoyl-CoA = (E)-4-coumaroyl-CoA + H2O. The enzyme catalyses (R)-3-(indol-3-yl)lactoyl-CoA = (E)-3-(indol-3-yl)acryloyl-CoA + H2O. Its pathway is amino-acid degradation; L-phenylalanine degradation. Component of the phenyllactate dehydratase complex FldABC that is involved in the fermentation of L-phenylalanine via a Stickland reaction. This complex catalyzes the reversible syn-dehydration of (R)-phenyllactate to (E)-cinnamate in two steps, a CoA-transfer from cinnamoyl-CoA to phenyllactate, catalyzed by FldA, followed by the dehydration of phenyllactyl-CoA to cinnamoyl-CoA, catalyzed by FldB and FldC. Requires the activator FldI to initiate catalysis. The protein is (R)-phenyllactyl-CoA dehydratase alpha subunit of Clostridium sporogenes.